We begin with the raw amino-acid sequence, 102 residues long: Large ribosomal subunit protein bL21 (102 aa).

The protein belongs to the bacterial ribosomal protein bL21 family. As to quaternary structure, part of the 50S ribosomal subunit. Contacts protein L20.

This protein binds to 23S rRNA in the presence of protein L20. The polypeptide is Large ribosomal subunit protein bL21 (Listeria monocytogenes serotype 4b (strain F2365)).